A 2259-amino-acid polypeptide reads, in one-letter code: Putative Polycomb group protein ASXL3 (2259 aa).

Residues 10 to 83 form the HTH HARE-type domain; sequence RTWAEAARLA…KSGLYALRKE (74 aa). Positions 181–230 are disordered; the sequence is VVLTPLKVSDEQSDSPSGSESKNGEADSSDKEMKHGQKSPTGKQTSQHLK. Positions 202–215 are enriched in basic and acidic residues; it reads KNGEADSSDKEMKH. Residues 218–227 show a composition bias toward polar residues; sequence KSPTGKQTSQ. In terms of domain architecture, DEUBAD spans 253–362; it reads PGSILVNTNL…FERFYGERSG (110 aa). 10 disordered regions span residues 364–399, 607–643, 703–810, 857–1012, 1025–1049, 1126–1150, 1433–1462, 1614–1643, 1687–1719, and 1993–2075; these read SREE…AQNA, CISE…CTPA, EASP…IPEP, SEMT…PLKI, SQPV…NTGA, RLPS…TKME, LSGE…GGFV, DPMR…GLKA, DFPG…TTSP, and NMLS…TTKR. Composition is skewed to polar residues over residues 607–617, 630–643, and 703–717; these read CISETSFSSES, GETQ…CTPA, and EASP…SEAS. Residues 722–741 are compositionally biased toward low complexity; it reads LPPTSETSSESSMPLTSETP. Composition is skewed to polar residues over residues 770–781 and 926–945; these read KSPSGSEEANSP and QSST…SEPS. Composition is skewed to basic and acidic residues over residues 949-985 and 995-1006; these read DGIR…DDQS and PEKEQPPREEPR. Residues 1034 to 1043 show a composition bias toward low complexity; that stretch reads RASTSTSVSS. The span at 1437-1448 shows a compositional bias: polar residues; that stretch reads NLDNNSGPLNRT. Over residues 1699 to 1719 the composition is skewed to polar residues; it reads EVTSSASVQPTQTMKPSTTSP. The segment covering 2023-2055 has biased composition (pro residues); that stretch reads PLPPPPPPPPPPPPPLALPPPPPPPPPLPPPLP. A PHD-type; atypical zinc finger spans residues 2221–2258; the sequence is ELKCSCRLKAMIVCKGCGAFCHDDCIGPSKLCVACLVV.

It belongs to the Asx family. As to quaternary structure, core component of the polycomb repressive deubiquitinase (PR-DUB) complex, at least composed of BAP1, one of ASXL1, ASXL2 or (probably) ASXL3, and one of MBD5 or MBD6. Distinct combinations of ASXL and MBD proteins may preferentially bind specific histone modification marks. The PR-DUB core associates with a number of accessory proteins, including FOXK1, FOXK2, KDM1B, HCFC1 and OGT; KDM1B specifically associates with ASXL2 PR-DUB complexes. Interacts (via PHD domain) with MBD5 and MBD6 (via MBD domain); the interaction is probably direct and mediates association of MBD proteins with the PR-DUB core.

The protein resides in the nucleus. In terms of biological role, putative Polycomb group (PcG) protein. PcG proteins act by forming multiprotein complexes, which are required to maintain the transcriptionally repressive state of homeotic genes throughout development. PcG proteins are not required to initiate repression, but to maintain it during later stages of development. They probably act via methylation of histones, rendering chromatin heritably changed in its expressibility. Non-catalytic component of the PR-DUB complex, a complex that specifically mediates deubiquitination of histone H2A monoubiquitinated at 'Lys-119' (H2AK119ub1). The PR-DUB complex is an epigenetic regulator of gene expression and acts as a transcriptional coactivator, affecting genes involved in development, cell communication, signaling, cell proliferation and cell viability. ASXL1, ASXL2 and ASXL3 function redundantly in the PR-DUB complex and are essential for chromatin recruitment and transcriptional activation of associated genes. In Mus musculus (Mouse), this protein is Putative Polycomb group protein ASXL3 (Asxl3).